Consider the following 142-residue polypeptide: Large ribosomal subunit protein uL13 (142 aa).

This sequence belongs to the universal ribosomal protein uL13 family. As to quaternary structure, part of the 50S ribosomal subunit.

In terms of biological role, this protein is one of the early assembly proteins of the 50S ribosomal subunit, although it is not seen to bind rRNA by itself. It is important during the early stages of 50S assembly. The chain is Large ribosomal subunit protein uL13 from Histophilus somni (Haemophilus somnus).